Consider the following 192-residue polypeptide: CASP-like protein 4C1 (192 aa).

Residues 1–11 (MRSPQSLRNGE) are compositionally biased toward polar residues. The segment at 1–23 (MRSPQSLRNGETPSPSPRPPRFP) is disordered. At 1–40 (MRSPQSLRNGETPSPSPRPPRFPTPHFHSTVSLQKLKRFN) the chain is on the cytoplasmic side. Positions 14–23 (SPSPRPPRFP) are enriched in pro residues. A helical transmembrane segment spans residues 41–61 (LLILVFRLSTFCFSLASSVFM). The Extracellular portion of the chain corresponds to 62-75 (LTNPTWYHFDAFRY). The chain crosses the membrane as a helical span at residues 76–96 (VFAANAIVAIYSLFEMAASVW). Residues 97 to 107 (EISRGNTLFPE) are Cytoplasmic-facing. A helical transmembrane segment spans residues 108-128 (ILQVWFDFGHDQVFAYLLLSA). Topologically, residues 129–156 (DSAATALAKTLKGGDTCAASNAFCVQSY) are extracellular. The helical transmembrane segment at 157–177 (IAIALGFAGFLFLGLSSLLSG) threads the bilayer. Topologically, residues 178-192 (FRVVCFLINGSRFYV) are cytoplasmic.

Belongs to the Casparian strip membrane proteins (CASP) family. Homodimer and heterodimers.

It localises to the cell membrane. The protein is CASP-like protein 4C1 of Ricinus communis (Castor bean).